We begin with the raw amino-acid sequence, 353 residues long: Photosystem II D2 protein (353 aa).

An N-acetylthreonine modification is found at Thr-2. Thr-2 bears the Phosphothreonine mark. A helical membrane pass occupies residues 41 to 61; that stretch reads CAYFAVGGWFTGTTFVTSWYT. Position 118 (His-118) interacts with chlorophyll a. The chain crosses the membrane as a helical span at residues 125 to 141; it reads GFMLRQFELARSVQLRP. 2 residues coordinate pheophytin a: Gln-130 and Asn-143. The helical transmembrane segment at 153–166 threads the bilayer; it reads VFVSVFLIYPLGQS. His-198 is a chlorophyll a binding site. A helical transmembrane segment spans residues 208–228; that stretch reads AALLCAIHGATVENTLFEDGD. A plastoquinone is bound by residues His-215 and Phe-262. His-215 contributes to the Fe cation binding site. His-269 lines the Fe cation pocket. The helical transmembrane segment at 279 to 295 threads the bilayer; sequence GLWMSALGVVGLALNLR.

This sequence belongs to the reaction center PufL/M/PsbA/D family. In terms of assembly, PSII is composed of 1 copy each of membrane proteins PsbA, PsbB, PsbC, PsbD, PsbE, PsbF, PsbH, PsbI, PsbJ, PsbK, PsbL, PsbM, PsbT, PsbX, PsbY, PsbZ, Psb30/Ycf12, at least 3 peripheral proteins of the oxygen-evolving complex and a large number of cofactors. It forms dimeric complexes. The cofactor is The D1/D2 heterodimer binds P680, chlorophylls that are the primary electron donor of PSII, and subsequent electron acceptors. It shares a non-heme iron and each subunit binds pheophytin, quinone, additional chlorophylls, carotenoids and lipids. There is also a Cl(-1) ion associated with D1 and D2, which is required for oxygen evolution. The PSII complex binds additional chlorophylls, carotenoids and specific lipids..

The protein resides in the plastid. It is found in the chloroplast thylakoid membrane. The catalysed reaction is 2 a plastoquinone + 4 hnu + 2 H2O = 2 a plastoquinol + O2. Its function is as follows. Photosystem II (PSII) is a light-driven water:plastoquinone oxidoreductase that uses light energy to abstract electrons from H(2)O, generating O(2) and a proton gradient subsequently used for ATP formation. It consists of a core antenna complex that captures photons, and an electron transfer chain that converts photonic excitation into a charge separation. The D1/D2 (PsbA/PsbD) reaction center heterodimer binds P680, the primary electron donor of PSII as well as several subsequent electron acceptors. D2 is needed for assembly of a stable PSII complex. This chain is Photosystem II D2 protein, found in Jasminum nudiflorum (Winter jasmine).